A 443-amino-acid polypeptide reads, in one-letter code: Probable glycine dehydrogenase (decarboxylating) subunit 1 (443 aa).

The protein belongs to the GcvP family. N-terminal subunit subfamily. In terms of assembly, the glycine cleavage system is composed of four proteins: P, T, L and H. In this organism, the P 'protein' is a heterodimer of two subunits.

The enzyme catalyses N(6)-[(R)-lipoyl]-L-lysyl-[glycine-cleavage complex H protein] + glycine + H(+) = N(6)-[(R)-S(8)-aminomethyldihydrolipoyl]-L-lysyl-[glycine-cleavage complex H protein] + CO2. The glycine cleavage system catalyzes the degradation of glycine. The P protein binds the alpha-amino group of glycine through its pyridoxal phosphate cofactor; CO(2) is released and the remaining methylamine moiety is then transferred to the lipoamide cofactor of the H protein. This Maridesulfovibrio salexigens (strain ATCC 14822 / DSM 2638 / NCIMB 8403 / VKM B-1763) (Desulfovibrio salexigens) protein is Probable glycine dehydrogenase (decarboxylating) subunit 1.